The primary structure comprises 720 residues: Proline-rich receptor-like protein kinase PERK12 (720 aa).

Residues 1–240 (MSDLGESPSS…GNGDGGGGGG (240 aa)) form a disordered region. The Extracellular portion of the chain corresponds to 1–246 (MSDLGESPSS…GGGGGYQGKT (246 aa)). Residues 10–25 (SSPPAPPADTAPPPET) show a composition bias toward pro residues. Residues 26–35 (PSENSALPPV) are compositionally biased toward low complexity. Pro residues-rich tracts occupy residues 52–84 (LSEP…PSDS) and 92–116 (PSPP…PAPP). N117 is a glycosylation site (N-linked (GlcNAc...) asparagine). Pro residues-rich tracts occupy residues 123–138 (NPPP…PSSP) and 147–207 (PESP…PPKT). A helical membrane pass occupies residues 247–267 (MVGMAVAGFAIMALIGVVFLV). At 268–720 (RRKKKRNIDS…ETRPFNNRRF (453 aa)) the chain is on the cytoplasmic side. Positions 300 to 349 (QDPGKGYSSGPNGSMYNNSQQQQSSMGNSYGTAGGGYPHHQMQSSGTPDS) are disordered. The span at 311 to 330 (NGSMYNNSQQQQSSMGNSYG) shows a compositional bias: low complexity. The region spanning 371-624 (FARKNILGEG…EVFRMIETAA (254 aa)) is the Protein kinase domain. ATP-binding positions include 377-385 (LGEGGFGCV) and K399. Phosphotyrosine is present on Y444. D495 functions as the Proton acceptor in the catalytic mechanism. At S528 the chain carries Phosphoserine. Residues T529 and T534 each carry the phosphothreonine modification. Residue Y542 is modified to Phosphotyrosine. The tract at residues 698–720 (SAKSSSDFSGNESETRPFNNRRF) is disordered.

It belongs to the protein kinase superfamily. Ser/Thr protein kinase family. In terms of tissue distribution, mostly expressed in apical parts, including flower buds, and particularly in anthers. Also present in root hairs.

Its subcellular location is the cell membrane. It carries out the reaction L-seryl-[protein] + ATP = O-phospho-L-seryl-[protein] + ADP + H(+). The enzyme catalyses L-threonyl-[protein] + ATP = O-phospho-L-threonyl-[protein] + ADP + H(+). Its function is as follows. Regulates the auxin-related MAX (More Axillary Growth) pathway during the shoot branching. In Arabidopsis thaliana (Mouse-ear cress), this protein is Proline-rich receptor-like protein kinase PERK12 (PERK12).